The following is a 424-amino-acid chain: Caspase-2 (424 aa).

A propeptide spanning residues 1 to 140 (MLGACGMQRY…IVEHSLDSGD (140 aa)) is cleaved from the precursor. Positions 7–96 (MQRYHQEALK…QHLAEMILKT (90 aa)) constitute a CARD domain. Active-site residues include H248 and C291. The span at 296 to 310 (TDRGVDQRDGKERSD) shows a compositional bias: basic and acidic residues. The interval 296-325 (TDRGVDQRDGKERSDSPGCEESDANKEENL) is disordered.

This sequence belongs to the peptidase C14A family. In terms of assembly, heterotetramer that consists of two anti-parallel arranged heterodimers, each one formed by a p18 subunit and a p12 subunit.

The enzyme catalyses Strict requirement for an Asp residue at P1, with 316-Asp being essential for proteolytic activity and has a preferred cleavage sequence of Val-Asp-Val-Ala-Asp-|-.. Functionally, involved in the activation cascade of caspases responsible for apoptosis execution. Might function by either activating some proteins required for cell death or inactivating proteins necessary for cell survival. The polypeptide is Caspase-2 (CASP2) (Gallus gallus (Chicken)).